A 250-amino-acid polypeptide reads, in one-letter code: Purine nucleoside phosphorylase BQ2027_MB2173C (250 aa).

Residues H77, C114, and H131 each contribute to the Zn(2+) site.

Belongs to the purine nucleoside phosphorylase YfiH/LACC1 family. Homodimer. It depends on Cu(2+) as a cofactor. Zn(2+) serves as cofactor.

It carries out the reaction adenosine + phosphate = alpha-D-ribose 1-phosphate + adenine. It catalyses the reaction S-methyl-5'-thioadenosine + phosphate = 5-(methylsulfanyl)-alpha-D-ribose 1-phosphate + adenine. The enzyme catalyses inosine + phosphate = alpha-D-ribose 1-phosphate + hypoxanthine. The catalysed reaction is adenosine + H2O + H(+) = inosine + NH4(+). Functionally, purine nucleoside enzyme that catalyzes the phosphorolysis of adenosine and inosine nucleosides, yielding D-ribose 1-phosphate and the respective free bases, adenine and hypoxanthine. Also catalyzes the phosphorolysis of S-methyl-5'-thioadenosine into adenine and S-methyl-5-thio-alpha-D-ribose 1-phosphate. Also has adenosine deaminase activity. The protein is Purine nucleoside phosphorylase BQ2027_MB2173C of Mycobacterium bovis (strain ATCC BAA-935 / AF2122/97).